The primary structure comprises 347 residues: Tetraacyldisaccharide 4'-kinase (347 aa).

Position 64–71 (64–71) interacts with ATP; that stretch reads YVGGTGKT.

The protein belongs to the LpxK family.

The enzyme catalyses a lipid A disaccharide + ATP = a lipid IVA + ADP + H(+). It participates in glycolipid biosynthesis; lipid IV(A) biosynthesis; lipid IV(A) from (3R)-3-hydroxytetradecanoyl-[acyl-carrier-protein] and UDP-N-acetyl-alpha-D-glucosamine: step 6/6. In terms of biological role, transfers the gamma-phosphate of ATP to the 4'-position of a tetraacyldisaccharide 1-phosphate intermediate (termed DS-1-P) to form tetraacyldisaccharide 1,4'-bis-phosphate (lipid IVA). This is Tetraacyldisaccharide 4'-kinase from Bordetella bronchiseptica (strain ATCC BAA-588 / NCTC 13252 / RB50) (Alcaligenes bronchisepticus).